A 545-amino-acid chain; its full sequence is E3 ubiquitin-protein ligase ipaH9.8 (545 aa).

The interaction with target proteins stretch occupies residues 1–242 (MLPINNNFSL…YHGPRIYFSM (242 aa)). 8 LRR repeats span residues 57-77 (NSDELRLDRLNLSSLPDNLPA), 78-99 (QITLLNVSYNQLTNLPELPVTL), 100-117 (KKLYSASNKLSELPVLPP), 118-139 (ALESLQVQHNELENLPALPDSL), 140-157 (LTMNISYNEIVSLPSLPQ), 158-179 (ALKNLRATRNFLTELPAFSEGN), 182-203 (VVREYFFDRNQISHIPESILNL), and 205-228 (NECSIHISDNPLSSHALQALQRLT). The interval 243-250 (SDGQQNTL) is linker. Residues 251–545 (HRPLADAVTA…SENGSQLHHS (295 aa)) form an E3 ubiquitin-protein ligase catalytic domain region. In terms of domain architecture, NEL spans 253-545 (PLADAVTAWF…SENGSQLHHS (293 aa)). Residue cysteine 337 is the Glycyl thioester intermediate of the active site.

This sequence belongs to the LRR-containing bacterial E3 ligase family. In terms of assembly, also interacts with human and mouse U2AF1 (U2AF35). Ubiquitinated in the presence of host E1 ubiquitin-activating enzyme, E2 ubiquitin-conjugating enzyme and ubiquitin.

Its subcellular location is the secreted. The protein localises to the host cytoplasm. It is found in the host nucleus. The enzyme catalyses S-ubiquitinyl-[E2 ubiquitin-conjugating enzyme]-L-cysteine + [acceptor protein]-L-lysine = [E2 ubiquitin-conjugating enzyme]-L-cysteine + N(6)-ubiquitinyl-[acceptor protein]-L-lysine.. Exists in an autoinhibited state in the absence of substrate protein, due to interactions of the leucine-rich repeats with NEL domain. Is activated upon binding to a substrate protein. Functionally, effector E3 ubiquitin ligase that interferes with host's ubiquitination pathway and modulates the acute inflammatory responses, thus facilitating bacterial colonization within the host cell. Interacts with IKBKG (NEMO) and TNIP1 (ABIN-1), a ubiquitin-binding adapter protein, which results in TNIP1-dependent 'Lys-27'-linked polyubiquitination of IKBKG. Consequently, polyubiquitinated IKBKG undergoes proteasome-dependent degradation, which perturbs NF-kappa-B activation during bacterial infection. Mediates polyubiquitination of host U2AF1, leading to its proteasomal degradation. Catalyzes 'Lys-48'-linked polyubiquitination and subsequent degradation of a subset of host guanylate-binding proteins (GBP1, GBP2, GBP4 and GBP6), thereby suppressing host cell defense. In contrast, host GBP3 and GBP7 are not ubiquitinated by IpaH9.8. Uses UBE2D2 (UBCH5B) as an E2 ubiquitin-conjugating enzyme. This chain is E3 ubiquitin-protein ligase ipaH9.8 (ipaH9.8), found in Shigella dysenteriae serotype 1 (strain Sd197).